The chain runs to 84 residues: RNA-binding protein Hfq (84 aa).

A Sm domain is found at 10–69; sequence DPFLNILRKERIPVSIYLVNGIKLQGQIDSFDQYVVLLKNSVTQMVYKHAISTIVPAKAI.

Belongs to the Hfq family. As to quaternary structure, homohexamer.

Its function is as follows. RNA chaperone that binds small regulatory RNA (sRNAs) and mRNAs to facilitate mRNA translational regulation in response to envelope stress, environmental stress and changes in metabolite concentrations. Also binds with high specificity to tRNAs. This chain is RNA-binding protein Hfq, found in Nitrosomonas europaea (strain ATCC 19718 / CIP 103999 / KCTC 2705 / NBRC 14298).